A 23-amino-acid polypeptide reads, in one-letter code: Pseudin-4 (23 aa).

As to expression, expressed by the skin glands.

It is found in the secreted. Functionally, possesses antifungal activity against C.albicans and is also active against E.coli and S.aureus. The polypeptide is Pseudin-4 (Pseudis paradoxa (Paradoxical frog)).